The sequence spans 163 residues: Steroid receptor-associated and regulated protein (163 aa).

Residues 1 to 16 are compositionally biased toward basic and acidic residues; sequence MAFSKDPRRTSLRDSS. Disordered stretches follow at residues 1–30 and 96–149; these read MAFSKDPRRTSLRDSSVEMSSGTQPSCAPK and ALDG…EKVK. Polar residues predominate over residues 17–26; that stretch reads VEMSSGTQPS.

In terms of assembly, interacts with 14-3-3 proteins.

Functionally, may regulate the transcriptional function of androgen and estrogen receptors. The chain is Steroid receptor-associated and regulated protein from Mus musculus (Mouse).